A 232-amino-acid polypeptide reads, in one-letter code: Large ribosomal subunit protein uL1 (232 aa).

The protein belongs to the universal ribosomal protein uL1 family. In terms of assembly, part of the 50S ribosomal subunit.

Its function is as follows. Binds directly to 23S rRNA. The L1 stalk is quite mobile in the ribosome, and is involved in E site tRNA release. Protein L1 is also a translational repressor protein, it controls the translation of the L11 operon by binding to its mRNA. The chain is Large ribosomal subunit protein uL1 from Bacillus velezensis (strain DSM 23117 / BGSC 10A6 / LMG 26770 / FZB42) (Bacillus amyloliquefaciens subsp. plantarum).